We begin with the raw amino-acid sequence, 636 residues long: MTTQSATTATSHYFVENPSTRALVIGAIGVVFGDIGTSPLYSLKECFSKEHGIPFSPDAVLGIISLLFWAMTIVVSIKYVVFVMRADNNGEGGVLALMALVLRTAAPRSRWAKVLMMLGIFGACMFYGDAVITPAISVLSAVEGLEIATPQLSRFVIPITLVILVALFLIQRNGTSVVGKLFGPVMVVWFVTLGLLGLYNLVQAPEILKAFNPYYGISFLIAHSLQAFIVLGSVFLVLTGAEALYVDMGHFGARPIRYGWFVLVMPCLILNYFGQGAMLLTNPAGAENPFYLMVPEPLLIPMVVLATCATVIASQAVISGAFSLTSQAIQLGFVPRMRVRYTSAAEIGQIYLPVINWILLVLVVAVVISFKKSENLAAAYGIAVTTTMVITTFLAAVVMRNVWKWNPALVTLLGLSFLLVDLAFFAANLLKVAEGGWFPLLLGSTAFFLLMTWYSGRKLLRARSLEDGIPLEPFIAGLLAHPPHRVEGTAVFLTGNTESVPVSLLHNLKHNRVLHERVVFLSFVTRDIPYVDDEQRLSCKDLGGGVFILKSDYGFKETPDVHKVLDLAQRKLGMHFELMETSFFIARESVIPSKLPGMSMWRESLFAWMHQNGAKPSDFFQIPANRVVELGTKVEI.

Transmembrane regions (helical) follow at residues 23-43 (LVIG…LYSL), 63-83 (IISL…VVFV), 114-134 (VLMM…VITP), 150-170 (PQLS…LFLI), 182-202 (FGPV…YNLV), 217-237 (ISFL…VFLV), 260-280 (WFVL…AMLL), 298-318 (LLIP…QAVI), 350-370 (IYLP…VISF), 379-399 (AYGI…AVVM), 407-427 (PALV…FFAA), and 432-452 (VAEG…LLMT).

It belongs to the HAK/KUP transporter (TC 2.A.72) family.

Its subcellular location is the cell inner membrane. It catalyses the reaction K(+)(in) + H(+)(in) = K(+)(out) + H(+)(out). In terms of biological role, transport of potassium into the cell. Likely operates as a K(+):H(+) symporter. This is Probable potassium transport system protein Kup from Cupriavidus pinatubonensis (strain JMP 134 / LMG 1197) (Cupriavidus necator (strain JMP 134)).